The chain runs to 1486 residues: Chromosome partition protein MukB (1486 aa).

Gly34–Ser41 is an ATP binding site. Coiled-coil stretches lie at residues Leu326–Gln418, Leu444–Gln480, and Arg509–Val603. Residues Pro666–Arg783 are flexible hinge. 3 coiled-coil regions span residues Glu835 to Glu923, Glu977 to Ala1115, and Val1209 to Ser1266.

This sequence belongs to the SMC family. MukB subfamily. Homodimerization via its hinge domain. Binds to DNA via its C-terminal region. Interacts, and probably forms a ternary complex, with MukE and MukF via its C-terminal region. The complex formation is stimulated by calcium or magnesium. Interacts with tubulin-related protein FtsZ.

Its subcellular location is the cytoplasm. The protein resides in the nucleoid. Functionally, plays a central role in chromosome condensation, segregation and cell cycle progression. Functions as a homodimer, which is essential for chromosome partition. Involved in negative DNA supercoiling in vivo, and by this means organize and compact chromosomes. May achieve or facilitate chromosome segregation by condensation DNA from both sides of a centrally located replisome during cell division. The chain is Chromosome partition protein MukB from Escherichia coli O6:K15:H31 (strain 536 / UPEC).